The chain runs to 1271 residues: Chitin synthase 4 (1271 aa).

2 disordered regions span residues 1 to 45 (MPPT…SFDH) and 58 to 117 (PNHP…ERPS). Positions 21-30 (APDTQESSPA) are enriched in polar residues. 2 helical membrane passes run 165 to 185 (WWIR…LVHL) and 201 to 221 (LAIF…IIFF). N-linked (GlcNAc...) asparagine glycosylation occurs at Asn-407. A helical transmembrane segment spans residues 473–493 (LLLAFSIILIATIASKFLAAL). Residues Asn-713 and Asn-836 are each glycosylated (N-linked (GlcNAc...) asparagine). Helical transmembrane passes span 867-887 (LLGT…VIVV), 894-914 (IPVI…LIFI), and 919-939 (FMLI…SVFL). Residues 999–1081 (HSESPAPSEK…DKSFIRGSKP (83 aa)) are disordered. Residues 1027-1037 (RSPSFHSSASE) are compositionally biased toward polar residues. N-linked (GlcNAc...) asparagine glycans are attached at residues Asn-1055 and Asn-1161. One can recognise a DEK-C domain in the interval 1213 to 1269 (EVQDEEVLDKLKTWLSKQDLMSVTKRQTREAIYTLFPNAGLQNRAGWLNEQIDKILS).

The protein belongs to the chitin synthase family.

It localises to the cell membrane. It carries out the reaction [(1-&gt;4)-N-acetyl-beta-D-glucosaminyl](n) + UDP-N-acetyl-alpha-D-glucosamine = [(1-&gt;4)-N-acetyl-beta-D-glucosaminyl](n+1) + UDP + H(+). Its function is as follows. Polymerizes chitin, a structural polymer of the cell wall and septum, by transferring the sugar moiety of UDP-GlcNAc to the non-reducing end of the growing chitin polymer. Produces a large proportion of the chitin that is not deacetylated to chitosan. This Cryptococcus neoformans var. grubii serotype A (strain H99 / ATCC 208821 / CBS 10515 / FGSC 9487) (Filobasidiella neoformans var. grubii) protein is Chitin synthase 4.